The following is a 323-amino-acid chain: tRNA U34 carboxymethyltransferase (323 aa).

Residues K91, W105, K110, G130, 152–154 (DPT), 181–182 (IE), M196, Y200, and R315 each bind carboxy-S-adenosyl-L-methionine.

This sequence belongs to the class I-like SAM-binding methyltransferase superfamily. CmoB family. In terms of assembly, homotetramer.

It catalyses the reaction carboxy-S-adenosyl-L-methionine + 5-hydroxyuridine(34) in tRNA = 5-carboxymethoxyuridine(34) in tRNA + S-adenosyl-L-homocysteine + H(+). Catalyzes carboxymethyl transfer from carboxy-S-adenosyl-L-methionine (Cx-SAM) to 5-hydroxyuridine (ho5U) to form 5-carboxymethoxyuridine (cmo5U) at position 34 in tRNAs. In Salmonella typhi, this protein is tRNA U34 carboxymethyltransferase.